The sequence spans 145 residues: Nucleoside diphosphate kinase (145 aa).

6 residues coordinate ATP: lysine 11, phenylalanine 59, arginine 87, threonine 93, arginine 104, and asparagine 114. Residue histidine 117 is the Pros-phosphohistidine intermediate of the active site.

This sequence belongs to the NDK family. As to quaternary structure, homotetramer. It depends on Mg(2+) as a cofactor.

Its subcellular location is the cytoplasm. The catalysed reaction is a 2'-deoxyribonucleoside 5'-diphosphate + ATP = a 2'-deoxyribonucleoside 5'-triphosphate + ADP. It catalyses the reaction a ribonucleoside 5'-diphosphate + ATP = a ribonucleoside 5'-triphosphate + ADP. Its function is as follows. Major role in the synthesis of nucleoside triphosphates other than ATP. The ATP gamma phosphate is transferred to the NDP beta phosphate via a ping-pong mechanism, using a phosphorylated active-site intermediate. In Myxococcus xanthus, this protein is Nucleoside diphosphate kinase.